An 813-amino-acid chain; its full sequence is Ribonuclease R (813 aa).

An RNB domain is found at 260-587; the sequence is RVDLRDLPLV…LHRAIKYLLA (328 aa). Lys-544 bears the N6-acetyllysine mark. The 82-residue stretch at 644 to 725 folds into the S1 motif domain; sequence GNVFKGVISS…DERKIDFSLI (82 aa). A disordered region spans residues 733 to 813; it reads NVGKTAREKA…KRAAKKKVAE (81 aa). Basic and acidic residues-rich tracts occupy residues 737-749 and 761-774; these read TARE…DAGK and VNFE…GEKK. Basic residues predominate over residues 775–791; the sequence is TKPKAAKKDARKAKKPS. The span at 792–801 shows a compositional bias: low complexity; it reads AKTQKIAAAT. Residues 802-813 are compositionally biased toward basic residues; sequence KAKRAAKKKVAE.

This sequence belongs to the RNR ribonuclease family. RNase R subfamily. In terms of assembly, monomer.

It localises to the cytoplasm. The catalysed reaction is Exonucleolytic cleavage in the 3'- to 5'-direction to yield nucleoside 5'-phosphates.. In terms of biological role, 3'-5' exoribonuclease that releases 5'-nucleoside monophosphates and is involved in maturation of structured RNAs. Required for the expression of virulence genes on the large plasmid of S.flexneri at the post-transcriptional level. The sequence is that of Ribonuclease R from Shigella flexneri.